A 469-amino-acid polypeptide reads, in one-letter code: Mannosyl-oligosaccharide 1,2-alpha-mannosidase IA (469 aa).

At 1-469 (REPADAAVRE…DQKEVEVKVK (469 aa)) the chain is on the lumenal side. A disulfide bond links Cys-292 and Cys-324. Residue Asn-329 is glycosylated (N-linked (GlcNAc...) asparagine). Glu-338 acts as the Proton donor in catalysis. Thr-449 is a binding site for Ca(2+).

It belongs to the glycosyl hydrolase 47 family. The cofactor is Ca(2+).

Its subcellular location is the golgi apparatus membrane. The catalysed reaction is N(4)-(alpha-D-Man-(1-&gt;2)-alpha-D-Man-(1-&gt;2)-alpha-D-Man-(1-&gt;3)-[alpha-D-Man-(1-&gt;2)-alpha-D-Man-(1-&gt;3)-[alpha-D-Man-(1-&gt;2)-alpha-D-Man-(1-&gt;6)]-alpha-D-Man-(1-&gt;6)]-beta-D-Man-(1-&gt;4)-beta-D-GlcNAc-(1-&gt;4)-beta-D-GlcNAc)-L-asparaginyl-[protein] (N-glucan mannose isomer 9A1,2,3B1,2,3) + 4 H2O = N(4)-(alpha-D-Man-(1-&gt;3)-[alpha-D-Man-(1-&gt;3)-[alpha-D-Man-(1-&gt;6)]-alpha-D-Man-(1-&gt;6)]-beta-D-Man-(1-&gt;4)-beta-D-GlcNAc-(1-&gt;4)-beta-D-GlcNAc)-L-asparaginyl-[protein] (N-glucan mannose isomer 5A1,2) + 4 beta-D-mannose. It catalyses the reaction N(4)-(alpha-D-Man-(1-&gt;2)-alpha-D-Man-(1-&gt;2)-alpha-D-Man-(1-&gt;3)-[alpha-D-Man-(1-&gt;3)-[alpha-D-Man-(1-&gt;2)-alpha-D-Man-(1-&gt;6)]-alpha-D-Man-(1-&gt;6)]-beta-D-Man-(1-&gt;4)-beta-D-GlcNAc-(1-&gt;4)-beta-D-GlcNAc)-L-asparaginyl-[protein] (N-glucan mannose isomer 8A1,2,3B1,3) + 3 H2O = N(4)-(alpha-D-Man-(1-&gt;3)-[alpha-D-Man-(1-&gt;3)-[alpha-D-Man-(1-&gt;6)]-alpha-D-Man-(1-&gt;6)]-beta-D-Man-(1-&gt;4)-beta-D-GlcNAc-(1-&gt;4)-beta-D-GlcNAc)-L-asparaginyl-[protein] (N-glucan mannose isomer 5A1,2) + 3 beta-D-mannose. It participates in protein modification; protein glycosylation. Its activity is regulated as follows. Inhibited by both 1-deoxymannojirimycin and kifunensine. Functionally, involved in the maturation of Asn-linked oligosaccharides. Progressively trim alpha-1,2-linked mannose residues from Man(9)GlcNAc(2) to produce Man(5)GlcNAc(2). The chain is Mannosyl-oligosaccharide 1,2-alpha-mannosidase IA (MAN1A1) from Oryctolagus cuniculus (Rabbit).